A 243-amino-acid polypeptide reads, in one-letter code: Ubiquinone/menaquinone biosynthesis C-methyltransferase UbiE (243 aa).

Residues T69, D90, and D116–A117 each bind S-adenosyl-L-methionine.

The protein belongs to the class I-like SAM-binding methyltransferase superfamily. MenG/UbiE family.

It carries out the reaction a 2-demethylmenaquinol + S-adenosyl-L-methionine = a menaquinol + S-adenosyl-L-homocysteine + H(+). The catalysed reaction is a 2-methoxy-6-(all-trans-polyprenyl)benzene-1,4-diol + S-adenosyl-L-methionine = a 5-methoxy-2-methyl-3-(all-trans-polyprenyl)benzene-1,4-diol + S-adenosyl-L-homocysteine + H(+). The protein operates within quinol/quinone metabolism; menaquinone biosynthesis; menaquinol from 1,4-dihydroxy-2-naphthoate: step 2/2. It participates in cofactor biosynthesis; ubiquinone biosynthesis. In terms of biological role, methyltransferase required for the conversion of demethylmenaquinol (DMKH2) to menaquinol (MKH2) and the conversion of 2-polyprenyl-6-methoxy-1,4-benzoquinol (DDMQH2) to 2-polyprenyl-3-methyl-6-methoxy-1,4-benzoquinol (DMQH2). The chain is Ubiquinone/menaquinone biosynthesis C-methyltransferase UbiE from Cupriavidus metallidurans (strain ATCC 43123 / DSM 2839 / NBRC 102507 / CH34) (Ralstonia metallidurans).